A 149-amino-acid chain; its full sequence is Deoxyuridine 5'-triphosphate nucleotidohydrolase (149 aa).

Residues 68-70 (RSG), N81, 85-87 (LID), and M95 each bind substrate.

This sequence belongs to the dUTPase family. Requires Mg(2+) as cofactor.

The catalysed reaction is dUTP + H2O = dUMP + diphosphate + H(+). The protein operates within pyrimidine metabolism; dUMP biosynthesis; dUMP from dCTP (dUTP route): step 2/2. In terms of biological role, this enzyme is involved in nucleotide metabolism: it produces dUMP, the immediate precursor of thymidine nucleotides and it decreases the intracellular concentration of dUTP so that uracil cannot be incorporated into DNA. The polypeptide is Deoxyuridine 5'-triphosphate nucleotidohydrolase (Polynucleobacter asymbioticus (strain DSM 18221 / CIP 109841 / QLW-P1DMWA-1) (Polynucleobacter necessarius subsp. asymbioticus)).